Here is a 143-residue protein sequence, read N- to C-terminus: Acyl carrier protein 3, chloroplastic (143 aa).

Residues 1-60 constitute a chloroplast transit peptide; sequence MATAAAGSSLICIKSASCSLNRAQVPSGLSSLRSVSLPISGKIFPSLRSSRGPLSFRVCC. In terms of domain architecture, Carrier spans 64–139; it reads QETVTRVCEI…DAADLIEKLV (76 aa). S99 is subject to O-(pantetheine 4'-phosphoryl)serine.

The protein belongs to the acyl carrier protein (ACP) family. In terms of processing, 4'-phosphopantetheine is transferred from CoA to a specific serine of apo-ACP by acpS. This modification is essential for activity because fatty acids are bound in thioester linkage to the sulfhydryl of the prosthetic group.

It localises to the plastid. The protein localises to the chloroplast. The protein operates within lipid metabolism; fatty acid biosynthesis. In terms of biological role, carrier of the growing fatty acid chain in fatty acid biosynthesis. The sequence is that of Acyl carrier protein 3, chloroplastic (ACL1.3) from Cuphea lanceolata (Cigar flower).